We begin with the raw amino-acid sequence, 251 residues long: Hydroxyacylglutathione hydrolase (251 aa).

Positions 53, 55, 57, 58, 110, 127, and 165 each coordinate Zn(2+).

Belongs to the metallo-beta-lactamase superfamily. Glyoxalase II family. In terms of assembly, monomer. Requires Zn(2+) as cofactor.

The enzyme catalyses an S-(2-hydroxyacyl)glutathione + H2O = a 2-hydroxy carboxylate + glutathione + H(+). It functions in the pathway secondary metabolite metabolism; methylglyoxal degradation; (R)-lactate from methylglyoxal: step 2/2. Thiolesterase that catalyzes the hydrolysis of S-D-lactoyl-glutathione to form glutathione and D-lactic acid. This chain is Hydroxyacylglutathione hydrolase, found in Yersinia pestis.